A 465-amino-acid chain; its full sequence is Cysteine--tRNA ligase (465 aa).

Position 30 (Cys-30) interacts with Zn(2+). The short motif at 32–42 (ITVYDYCHVGH) is the 'HIGH' region element. Residues Cys-214, His-239, and Glu-243 each contribute to the Zn(2+) site. The short motif at 271–275 (KMSKS) is the 'KMSKS' region element. An ATP-binding site is contributed by Lys-274.

Belongs to the class-I aminoacyl-tRNA synthetase family. Monomer. The cofactor is Zn(2+).

The protein resides in the cytoplasm. The catalysed reaction is tRNA(Cys) + L-cysteine + ATP = L-cysteinyl-tRNA(Cys) + AMP + diphosphate. This Burkholderia cenocepacia (strain HI2424) protein is Cysteine--tRNA ligase.